A 445-amino-acid chain; its full sequence is Phosphoglucosamine mutase (445 aa).

The active-site Phosphoserine intermediate is Ser-102. Residues Ser-102, Asp-241, Asp-243, and Asp-245 each contribute to the Mg(2+) site. Ser-102 carries the phosphoserine modification.

This sequence belongs to the phosphohexose mutase family. Requires Mg(2+) as cofactor. Post-translationally, activated by phosphorylation.

It carries out the reaction alpha-D-glucosamine 1-phosphate = D-glucosamine 6-phosphate. In terms of biological role, catalyzes the conversion of glucosamine-6-phosphate to glucosamine-1-phosphate. This chain is Phosphoglucosamine mutase, found in Escherichia coli O7:K1 (strain IAI39 / ExPEC).